The chain runs to 205 residues: MIGKLKGLIDSYGEDYVILDVHGVGYQVHCSSRTLQALPSPGEAATLSIETYVREDQIKLFGFRTDHEREWFRLLQTVQSVGAKVALAVLSTLPPNDLANAIALRDKAAVARTPGVGPKVAERIVSELKDKVPALSNVDPAVVQLSGALDDNRAPRPVTDAISALVNLGYGQPQAAAAIAAAARAAGDDAATAQLIKLGLKELSK.

A domain I region spans residues 1 to 64 (MIGKLKGLID…EDQIKLFGFR (64 aa)). The domain II stretch occupies residues 65–143 (TDHEREWFRL…ALSNVDPAVV (79 aa)). The segment at 144–154 (QLSGALDDNRA) is flexible linker. The tract at residues 154 to 205 (APRPVTDAISALVNLGYGQPQAAAAIAAAARAAGDDAATAQLIKLGLKELSK) is domain III.

Belongs to the RuvA family. In terms of assembly, homotetramer. Forms an RuvA(8)-RuvB(12)-Holliday junction (HJ) complex. HJ DNA is sandwiched between 2 RuvA tetramers; dsDNA enters through RuvA and exits via RuvB. An RuvB hexamer assembles on each DNA strand where it exits the tetramer. Each RuvB hexamer is contacted by two RuvA subunits (via domain III) on 2 adjacent RuvB subunits; this complex drives branch migration. In the full resolvosome a probable DNA-RuvA(4)-RuvB(12)-RuvC(2) complex forms which resolves the HJ.

The protein resides in the cytoplasm. Its function is as follows. The RuvA-RuvB-RuvC complex processes Holliday junction (HJ) DNA during genetic recombination and DNA repair, while the RuvA-RuvB complex plays an important role in the rescue of blocked DNA replication forks via replication fork reversal (RFR). RuvA specifically binds to HJ cruciform DNA, conferring on it an open structure. The RuvB hexamer acts as an ATP-dependent pump, pulling dsDNA into and through the RuvAB complex. HJ branch migration allows RuvC to scan DNA until it finds its consensus sequence, where it cleaves and resolves the cruciform DNA. This Rhodopseudomonas palustris (strain BisB5) protein is Holliday junction branch migration complex subunit RuvA.